A 955-amino-acid chain; its full sequence is 2-oxoglutarate dehydrogenase E1 component (955 aa).

The protein belongs to the alpha-ketoglutarate dehydrogenase family. In terms of assembly, homodimer. Part of the 2-oxoglutarate dehydrogenase (OGDH) complex composed of E1 (2-oxoglutarate dehydrogenase), E2 (dihydrolipoamide succinyltransferase) and E3 (dihydrolipoamide dehydrogenase); the complex contains multiple copies of the three enzymatic components (E1, E2 and E3). The cofactor is thiamine diphosphate.

The enzyme catalyses N(6)-[(R)-lipoyl]-L-lysyl-[protein] + 2-oxoglutarate + H(+) = N(6)-[(R)-S(8)-succinyldihydrolipoyl]-L-lysyl-[protein] + CO2. Its function is as follows. E1 component of the 2-oxoglutarate dehydrogenase (OGDH) complex which catalyzes the decarboxylation of 2-oxoglutarate, the first step in the conversion of 2-oxoglutarate to succinyl-CoA and CO(2). The chain is 2-oxoglutarate dehydrogenase E1 component from Bacillus mycoides (strain KBAB4) (Bacillus weihenstephanensis).